Here is a 166-residue protein sequence, read N- to C-terminus: NADH-ubiquinone oxidoreductase chain 6 (166 aa).

The next 5 helical transmembrane spans lie at 1–21, 26–46, 47–67, 87–107, and 139–159; these read MMYF…AFAS, IYGG…VVSL, GGSF…LVVF, VFTN…YFSG, and CGGW…FVVL.

Belongs to the complex I subunit 6 family. As to quaternary structure, core subunit of respiratory chain NADH dehydrogenase (Complex I) which is composed of 45 different subunits.

Its subcellular location is the mitochondrion inner membrane. It catalyses the reaction a ubiquinone + NADH + 5 H(+)(in) = a ubiquinol + NAD(+) + 4 H(+)(out). In terms of biological role, core subunit of the mitochondrial membrane respiratory chain NADH dehydrogenase (Complex I) which catalyzes electron transfer from NADH through the respiratory chain, using ubiquinone as an electron acceptor. Essential for the catalytic activity and assembly of complex I. In Ornithorhynchus anatinus (Duckbill platypus), this protein is NADH-ubiquinone oxidoreductase chain 6 (MT-ND6).